The following is a 137-amino-acid chain: Histone H2B (137 aa).

The span at 1–10 (MAPKAADKKP) shows a compositional bias: basic and acidic residues. The disordered stretch occupies residues 1–46 (MAPKAADKKPASKAPATASKAPEKKDAGKKTAASGDKKKRSKSRKE). 2 positions are modified to N6-acetyllysine; alternate: lysine 8 and lysine 9. Glycyl lysine isopeptide (Lys-Gly) (interchain with G-Cter in SUMO); alternate cross-links involve residues lysine 8 and lysine 9. Position 12 is a phosphoserine (serine 12). N6-acetyllysine is present on lysine 13. At lysine 24 the chain carries N6-acetyllysine; alternate. Lysine 24 is covalently cross-linked (Glycyl lysine isopeptide (Lys-Gly) (interchain with G-Cter in SUMO); alternate). Residue lysine 25 forms a Glycyl lysine isopeptide (Lys-Gly) (interchain with G-Cter in SUMO) linkage. Residue lysine 131 forms a Glycyl lysine isopeptide (Lys-Gly) (interchain with G-Cter in ubiquitin) linkage.

It belongs to the histone H2B family. The nucleosome is a histone octamer containing two molecules each of H2A, H2B, H3 and H4 assembled in one H3-H4 heterotetramer and two H2A-H2B heterodimers. The octamer wraps approximately 147 bp of DNA. Post-translationally, monoubiquitinated by the UBC2-BRE1 complex to form H2BK123ub1. H2BK123ub1 gives a specific tag for epigenetic transcriptional activation and is also prerequisite for H3K4me and H3K79me formation. H2BK123ub1 also modulates the formation of double-strand breaks during meiosis and is a prerequisite for DNA-damage checkpoint activation. In terms of processing, phosphorylated to form H2BS10ph during progression through meiotic prophase. May be correlated with chromosome condensation. Acetylated by GCN5 to form H2BK11ac and H2BK16ac. H2BK16ac can also be formed by ESA1. Acetylation of N-terminal lysines and particularly formation of H2BK11acK16ac has a positive effect on transcription. Post-translationally, sumoylation to form H2BK6su or H2BK7su, and probably also H2BK16su or H2BK17su, occurs preferentially near the telomeres and represses gene transcription.

It is found in the nucleus. The protein localises to the chromosome. In terms of biological role, core component of nucleosome. Nucleosomes wrap and compact DNA into chromatin, limiting DNA accessibility to the cellular machineries which require DNA as a template. Histones thereby play a central role in transcription regulation, DNA repair, DNA replication and chromosomal stability. DNA accessibility is regulated via a complex set of post-translational modifications of histones, also called histone code, and nucleosome remodeling. The polypeptide is Histone H2B (HTB1) (Gibberella zeae (strain ATCC MYA-4620 / CBS 123657 / FGSC 9075 / NRRL 31084 / PH-1) (Wheat head blight fungus)).